The sequence spans 530 residues: Pentatricopeptide repeat-containing protein At5g56310 (530 aa).

10 PPR repeats span residues 77–114, 115–149, 150–180, 181–211, 214–248, 249–283, 284–314, 315–349, 350–380, and 386–420; these read NTYL…CAKP, DTFT…GFDS, SVHV…MLVK, DVNV…MPCW, NEVS…NVEP, DEVT…GMNR, AVSL…VNER, NVVT…GVRP, NDVT…MRSK, and NIEH…ANAA. The tract at residues 421 to 496 is type E motif; that stretch reads IWGSLLAASN…MAGESSIEVE (76 aa). The type E(+) motif stretch occupies residues 497-527; it reads NRVYKFISGDLTHPQVERIHEILQEMDLQIQ.

The protein belongs to the PPR family. PCMP-E subfamily.

This Arabidopsis thaliana (Mouse-ear cress) protein is Pentatricopeptide repeat-containing protein At5g56310 (PCMP-E13).